The primary structure comprises 388 residues: Protein DJ-1 homolog D (388 aa).

PfpI endopeptidase domains follow at residues 5–190 and 198–383; these read RTVL…KALG and KRIL…ALLG. Cysteine 120 serves as the catalytic Nucleophile. Position 120 is a cysteine sulfenic acid (-SOH) (cysteine 120). Histidine 121 is a catalytic residue. Cysteine 313 serves as the catalytic Nucleophile. Cysteine 313 is modified (cysteine sulfinic acid (-SO2H)). Histidine 314 is a catalytic residue.

The protein belongs to the peptidase C56 family. In terms of assembly, homotrimer. In terms of processing, cys-120 and Cys-313 are oxidized to sulfinic acid.

The enzyme catalyses (R)-S-lactoylglutathione = methylglyoxal + glutathione. Functionally, possesses glyoxalase I activity. Catalyzes the conversion of hemimercaptal, formed from methylglyoxal and glutathione, to S-lactoylglutathione. May be involved in oxidative stress response. The sequence is that of Protein DJ-1 homolog D (DJ1D) from Arabidopsis thaliana (Mouse-ear cress).